A 197-amino-acid polypeptide reads, in one-letter code: Adenylate kinase (197 aa).

12-17 is an ATP binding site; it reads GSGKTT. An NMP region spans residues 34–63; it reads STGDMLREEVASGSELGKTIESYIAKGALV. AMP-binding positions include Thr35, Arg40, 61–63, 88–91, and Gln95; these read ALV and GYPR. The LID stretch occupies residues 130–144; it reads GRRAEAAPGEERSDD. Residue Arg131 coordinates ATP. Residues Arg141 and Arg152 each coordinate AMP. Arg180 lines the ATP pocket.

Belongs to the adenylate kinase family. As to quaternary structure, monomer.

It is found in the cytoplasm. The catalysed reaction is AMP + ATP = 2 ADP. Its pathway is purine metabolism; AMP biosynthesis via salvage pathway; AMP from ADP: step 1/1. Catalyzes the reversible transfer of the terminal phosphate group between ATP and AMP. Plays an important role in cellular energy homeostasis and in adenine nucleotide metabolism. This Sulfurovum sp. (strain NBC37-1) protein is Adenylate kinase.